The sequence spans 195 residues: Interferon tau-6 (195 aa).

The first 23 residues, 1-23 (MAFVLSLLMALVLVSYGPGGSLG), serve as a signal peptide directing secretion. 2 cysteine pairs are disulfide-bonded: Cys24–Cys122 and Cys52–Cys162. An N-linked (GlcNAc...) asparagine glycan is attached at Asn101.

It belongs to the alpha/beta interferon family. IFN-alphaII subfamily. In terms of tissue distribution, constitutively and exclusively expressed in the mononuclear cells of the extraembryonic trophectoderm.

The protein resides in the secreted. Paracrine hormone primarily responsible for maternal recognition of pregnancy. Interacts with endometrial receptors, probably type I interferon receptors, and blocks estrogen receptor expression, preventing the estrogen-induced increase in oxytocin receptor expression in the endometrium. This results in the suppression of the pulsatile endometrial release of the luteolytic hormone prostaglandin F2-alpha, hindering the regression of the corpus luteum (luteolysis) and therefore a return to ovarian cyclicity. This, and a possible direct effect of IFN-tau on prostaglandin synthesis, leads in turn to continued ovarian progesterone secretion, which stimulates the secretion by the endometrium of the nutrients required for the growth of the conceptus. In summary, displays particularly high antiviral and antiproliferative potency concurrently with particular weak cytotoxicity, high antiluteolytic activity and immunomodulatory properties. In contrast with other IFNs, IFN-tau is not virally inducible. This is Interferon tau-6 (IFNT6) from Ovis aries (Sheep).